A 287-amino-acid chain; its full sequence is Formamidopyrimidine-DNA glycosylase (287 aa).

Residue Pro-2 is the Schiff-base intermediate with DNA of the active site. The active-site Proton donor is Glu-3. The Proton donor; for beta-elimination activity role is filled by Lys-60. Residues His-100 and Arg-119 each contribute to the DNA site. The FPG-type zinc finger occupies 249 to 283 (QVYGREGEPCRHCGTVIAKIKLGGRSAHFCPQCQP). The Proton donor; for delta-elimination activity role is filled by Arg-273.

It belongs to the FPG family. Monomer. The cofactor is Zn(2+).

It carries out the reaction Hydrolysis of DNA containing ring-opened 7-methylguanine residues, releasing 2,6-diamino-4-hydroxy-5-(N-methyl)formamidopyrimidine.. The enzyme catalyses 2'-deoxyribonucleotide-(2'-deoxyribose 5'-phosphate)-2'-deoxyribonucleotide-DNA = a 3'-end 2'-deoxyribonucleotide-(2,3-dehydro-2,3-deoxyribose 5'-phosphate)-DNA + a 5'-end 5'-phospho-2'-deoxyribonucleoside-DNA + H(+). In terms of biological role, involved in base excision repair of DNA damaged by oxidation or by mutagenic agents. Acts as a DNA glycosylase that recognizes and removes damaged bases. Has a preference for oxidized purines, such as 7,8-dihydro-8-oxoguanine (8-oxoG). Has AP (apurinic/apyrimidinic) lyase activity and introduces nicks in the DNA strand. Cleaves the DNA backbone by beta-delta elimination to generate a single-strand break at the site of the removed base with both 3'- and 5'-phosphates. This is Formamidopyrimidine-DNA glycosylase (mutM) from Synechocystis sp. (strain ATCC 27184 / PCC 6803 / Kazusa).